Reading from the N-terminus, the 145-residue chain is ATP synthase epsilon chain (145 aa).

Positions 100–123 (RAQRAKQRAEDAIKTASEKHDSDE) are disordered. A compositionally biased stretch (basic and acidic residues) spans 106–123 (QRAEDAIKTASEKHDSDE).

It belongs to the ATPase epsilon chain family. F-type ATPases have 2 components, CF(1) - the catalytic core - and CF(0) - the membrane proton channel. CF(1) has five subunits: alpha(3), beta(3), gamma(1), delta(1), epsilon(1). CF(0) has three main subunits: a, b and c.

Its subcellular location is the cell membrane. Its function is as follows. Produces ATP from ADP in the presence of a proton gradient across the membrane. This Latilactobacillus sakei subsp. sakei (strain 23K) (Lactobacillus sakei subsp. sakei) protein is ATP synthase epsilon chain.